Reading from the N-terminus, the 132-residue chain is ATP synthase epsilon chain (132 aa).

Belongs to the ATPase epsilon chain family. F-type ATPases have 2 components, CF(1) - the catalytic core - and CF(0) - the membrane proton channel. CF(1) has five subunits: alpha(3), beta(3), gamma(1), delta(1), epsilon(1). CF(0) has three main subunits: a, b and c.

It is found in the cell membrane. Functionally, produces ATP from ADP in the presence of a proton gradient across the membrane. This Bacillus velezensis (strain DSM 23117 / BGSC 10A6 / LMG 26770 / FZB42) (Bacillus amyloliquefaciens subsp. plantarum) protein is ATP synthase epsilon chain.